Here is a 349-residue protein sequence, read N- to C-terminus: Isopentenyl-diphosphate delta-isomerase (349 aa).

R9 to K10 provides a ligand contact to substrate. Residues A65–T67, S95, and N124 each bind FMN. S95 to H97 serves as a coordination point for substrate. Q154 is a substrate binding site. E155 contributes to the Mg(2+) binding site. Residues K186, S211, T216, G262–R264, and S283–R284 contribute to the FMN site.

It belongs to the IPP isomerase type 2 family. As to quaternary structure, homooctamer. Dimer of tetramers. Requires FMN as cofactor. NADPH is required as a cofactor. The cofactor is Mg(2+).

Its subcellular location is the cytoplasm. The enzyme catalyses isopentenyl diphosphate = dimethylallyl diphosphate. In terms of biological role, involved in the biosynthesis of isoprenoids. Catalyzes the 1,3-allylic rearrangement of the homoallylic substrate isopentenyl (IPP) to its allylic isomer, dimethylallyl diphosphate (DMAPP). The chain is Isopentenyl-diphosphate delta-isomerase from Staphylococcus epidermidis (strain ATCC 35984 / DSM 28319 / BCRC 17069 / CCUG 31568 / BM 3577 / RP62A).